The following is a 175-amino-acid chain: MSQALTLARPYGRAAFAIAREGGTFAPWSDALAFSAQVAGDPRVAALLLNPALGQEQAVTLLAPPQAGEDYLCFLGVLADAQRLSLLPEVAGLYEHLRAEAEHVVKATVTSAAAMSQTELDTIAAALKKRFGRDVDITTAVDASLIGGAVIDTGDVVIDGSLKGKLARLQSSLAH.

It belongs to the ATPase delta chain family. As to quaternary structure, F-type ATPases have 2 components, F(1) - the catalytic core - and F(0) - the membrane proton channel. F(1) has five subunits: alpha(3), beta(3), gamma(1), delta(1), epsilon(1). F(0) has three main subunits: a(1), b(2) and c(10-14). The alpha and beta chains form an alternating ring which encloses part of the gamma chain. F(1) is attached to F(0) by a central stalk formed by the gamma and epsilon chains, while a peripheral stalk is formed by the delta and b chains.

The protein localises to the cell inner membrane. Functionally, f(1)F(0) ATP synthase produces ATP from ADP in the presence of a proton or sodium gradient. F-type ATPases consist of two structural domains, F(1) containing the extramembraneous catalytic core and F(0) containing the membrane proton channel, linked together by a central stalk and a peripheral stalk. During catalysis, ATP synthesis in the catalytic domain of F(1) is coupled via a rotary mechanism of the central stalk subunits to proton translocation. Its function is as follows. This protein is part of the stalk that links CF(0) to CF(1). It either transmits conformational changes from CF(0) to CF(1) or is implicated in proton conduction. The protein is ATP synthase subunit delta of Xanthomonas oryzae pv. oryzae (strain PXO99A).